Reading from the N-terminus, the 540-residue chain is Acyl-CoA synthetase 7 (540 aa).

ATP contacts are provided by residues 186–194 (SSGTTGKPK), D415, R430, and K522. Positions 538-540 (AKL) match the Microbody targeting signal motif.

This sequence belongs to the ATP-dependent AMP-binding enzyme family. Expressed in intestine.

It localises to the peroxisome. It carries out the reaction nonanoate + ATP + CoA = nonanoyl-CoA + AMP + diphosphate. The catalysed reaction is IC-asc-C7 + ATP + CoA = IC-asc-C7-CoA + AMP + diphosphate. The enzyme catalyses IC-asc-C9 + ATP + CoA = IC-asc-C9-CoA + AMP + diphosphate. Plays a role in ascaroside pheromones biosynthesis, which regulates development and behavior. Specifically, activates the side chain of medium-chain indol-3-carbonyl (IC)-ascarosides for shortening through beta-oxidation. Converts IC-asc-C7 and IC-asc-C9 into IC-asc-C7-CoA and IC-asc-C9-CoA, respectively. May play a role in fatty-acid metabolism by activating and converting nonanoate (C9) into nonanoyl-CoA (C9-CoA). The polypeptide is Acyl-CoA synthetase 7 (Caenorhabditis elegans).